Here is a 257-residue protein sequence, read N- to C-terminus: tRNA (guanine-N(1)-)-methyltransferase (257 aa).

S-adenosyl-L-methionine-binding positions include Gly-117 and 137–142; that span reads LGDFVL.

The protein belongs to the RNA methyltransferase TrmD family. Homodimer.

Its subcellular location is the cytoplasm. The catalysed reaction is guanosine(37) in tRNA + S-adenosyl-L-methionine = N(1)-methylguanosine(37) in tRNA + S-adenosyl-L-homocysteine + H(+). Functionally, specifically methylates guanosine-37 in various tRNAs. In Bordetella pertussis (strain Tohama I / ATCC BAA-589 / NCTC 13251), this protein is tRNA (guanine-N(1)-)-methyltransferase.